Here is a 700-residue protein sequence, read N- to C-terminus: Beta-galactosidase Bga (700 aa).

Arginine 103 contacts substrate. Zn(2+) is bound at residue cysteine 107. Asparagine 141 is a binding site for substrate. Glutamate 142 serves as the catalytic Proton donor. Positions 151, 153, and 156 each coordinate Zn(2+). Glutamate 312 acts as the Nucleophile in catalysis. Substrate is bound by residues tryptophan 320 and 360–363 (EQYH). The span at 648–658 (DPESLAVDDTD) shows a compositional bias: acidic residues. A disordered region spans residues 648 to 674 (DPESLAVDDTDRDGFDPMADDDKDSSA).

Belongs to the glycosyl hydrolase 42 family.

It catalyses the reaction Hydrolysis of terminal non-reducing beta-D-galactose residues in beta-D-galactosides.. With respect to regulation, requires 4 M NaCl or KCl for maximal activity. Its function is as follows. Cleaves o-nitrophenyl-beta-D-galactopyranoside (ONPG) in vitro. The chain is Beta-galactosidase Bga from Halorubrum lacusprofundi (strain ATCC 49239 / DSM 5036 / JCM 8891 / ACAM 34).